Consider the following 236-residue polypeptide: MLSKGLKRKREEEEEKEPLAVDSWWLDPGHTAVAQAPPAVASSSLFDLSVLKLHHSLQQSEPDLRHLVLVVNTLRRIQASMAPAAALPPVPSPPAAPSVADNLLASSDAALSASMASLLEDLSHIEGLSQAPQPLADEGPPGRSIGGAAPSLGALDLLGPATGCLLDDGLEGLFEDIDTSMYDNELWAPASEGLKPGPEDGPGKEEAPELDEAELDYLMDVLVGTQALERPPGPGR.

Residues 1 to 20 (MLSKGLKRKREEEEEKEPLA) are disordered. Residues 38-85 (PAVASSSLFDLSVLKLHHSLQQSEPDLRHLVLVVNTLRRIQASMAPAA) form the SERTA domain. Residues 189–211 (PASEGLKPGPEDGPGKEEAPELD) are disordered. Over residues 197–207 (GPEDGPGKEEA) the composition is skewed to basic and acidic residues.

Interacts with the PHD-bromodomain of TIF1, TRIM28/TIF1B and p300/CBP. Interacts with E2F1 and TFDP1; modulates transactivation activity of TFDP1/E2F complexes. Also interacts with CDK4. Polyubiquitinated, which promotes proteasomal degradation.

Acts at E2F-responsive promoters as coregulator to integrate signals provided by PHD- and/or bromodomain-containing transcription factors. Stimulates E2F1/TFDP1 transcriptional activity. Renders the activity of cyclin D1/CDK4 resistant to the inhibitory effects of CDKN2A/p16INK4A. The sequence is that of SERTA domain-containing protein 1 (SERTAD1) from Homo sapiens (Human).